The primary structure comprises 4639 residues: Dynein heavy chain, cytoplasmic (4639 aa).

Residues 1 to 1856 (MGDSLENPDT…TIHMANARFF (1856 aa)) form a stem region. 3 coiled-coil regions span residues 530-565 (LDITKEGSEAWEAAVKRYEEKIDRVETRITAHLRDQ), 774-794 (SLIESVRTYERTLEKIEDRAS), and 1264-1368 (DDAL…ARLR). AAA stretches follow at residues 1857-2084 (YGFE…VLIS), 2166-2437 (EEIR…FTRL), 2541-2790 (EVET…WVRG), and 2884-3153 (VFYE…GGRT). Residues 1895-1902 (GPAGTGKT), 2210-2217 (GPSGSGKS), 2580-2587 (GPPGSGKT), and 2922-2929 (GVSGAGKT) contribute to the ATP site. Coiled coils occupy residues 3189–3261 (GLNK…EKRK), 3382–3478 (AIAQ…WEST), and 3723–3782 (EFRL…EIET). The tract at residues 3189–3478 (GLNKIAETVE…NIERERWEST (290 aa)) is stalk. AAA regions lie at residues 3539–3768 (LSNP…DINQ) and 3989–4205 (AHNV…TLDT).

Belongs to the dynein heavy chain family. As to quaternary structure, consists of at least two heavy chains and a number of intermediate and light chains.

Its subcellular location is the cytoplasm. It is found in the cytoskeleton. In terms of biological role, cytoplasmic dynein acts as a motor for the intracellular retrograde motility of vesicles and organelles along microtubules. Dynein has ATPase activity; the force-producing power stroke is thought to occur on release of ADP. This Drosophila melanogaster (Fruit fly) protein is Dynein heavy chain, cytoplasmic (Dhc64C).